Reading from the N-terminus, the 248-residue chain is Triosephosphate isomerase A (248 aa).

Positions 11 and 13 each coordinate substrate. Histidine 95 acts as the Electrophile in catalysis. Glutamate 165 functions as the Proton acceptor in the catalytic mechanism.

Belongs to the triosephosphate isomerase family. Homodimer.

It localises to the cytoplasm. It catalyses the reaction dihydroxyacetone phosphate = methylglyoxal + phosphate. The catalysed reaction is D-glyceraldehyde 3-phosphate = dihydroxyacetone phosphate. Its pathway is carbohydrate degradation; glycolysis; D-glyceraldehyde 3-phosphate from glycerone phosphate: step 1/1. It participates in carbohydrate biosynthesis; gluconeogenesis. Functionally, triosephosphate isomerase is an extremely efficient metabolic enzyme that catalyzes the interconversion between dihydroxyacetone phosphate (DHAP) and D-glyceraldehyde-3-phosphate (G3P) in glycolysis and gluconeogenesis. In terms of biological role, it is also responsible for the non-negligible production of methylglyoxal a reactive cytotoxic side-product that modifies and can alter proteins, DNA and lipids. This Danio rerio (Zebrafish) protein is Triosephosphate isomerase A (tpi1a).